A 164-amino-acid chain; its full sequence is Disulfide bond formation protein B (164 aa).

At 1–9 (MTLPSARTC) the chain is on the cytoplasmic side. The helical transmembrane segment at 10-26 (FLLGFLFCAALLAAALY) threads the bilayer. Residues 27 to 44 (FQFSGGLEPCPLCISQRI) lie on the Periplasmic side of the membrane. Residues Cys-36 and Cys-39 are joined by a disulfide bond. The chain crosses the membrane as a helical span at residues 45–61 (MVLAVALVFLAAAIHHP). The Cytoplasmic segment spans residues 62–68 (ASLGIRA). Residues 69–85 (YALLGTAVALGGASISG) form a helical membrane-spanning segment. Residues 86–142 (RHVWLLHLPPEEVPECGPGLSYMFRNFPLGDTLKAMLSGTGDCAKVDWTFLGLSMPA) lie on the Periplasmic side of the membrane. Cysteines 101 and 128 form a disulfide. A helical transmembrane segment spans residues 143 to 161 (WVLICFLGLGAFSLLQWWN). The Cytoplasmic segment spans residues 162-164 (AER).

The protein belongs to the DsbB family.

It localises to the cell inner membrane. Required for disulfide bond formation in some periplasmic proteins. Acts by oxidizing the DsbA protein. This chain is Disulfide bond formation protein B, found in Methylococcus capsulatus (strain ATCC 33009 / NCIMB 11132 / Bath).